The chain runs to 653 residues: Fusexin 1 (653 aa).

A signal peptide spans 1-23 (MKNGLKASVVALFFLLAASSASA). Residues 24-559 (ATNSVDTVTY…MEKALSGNAG (536 aa)) lie on the Extracellular side of the membrane. Disulfide bonds link C126/C166, C397/C440, C467/C490, and C502/C519. The segment at 154 to 159 (DTWTGQ) is fusion loop. Residues 560–580 (ALTWAQLLLSFIGFLAGFALV) traverse the membrane as a helical segment. The Cytoplasmic portion of the chain corresponds to 581–600 (GVKLGKMVDGLATEFIPLSD). 2 consecutive transmembrane segments (helical) span residues 601-621 (AVVR…AVYQ) and 622-642 (LVTN…TGYL). Residues 643–653 (YLKGTTPDINL) lie on the Cytoplasmic side of the membrane.

This sequence belongs to the HAP2/GCS1 family. Fusexin 1 subfamily. Homotrimer stabilized by interdomain contacts and numerous Ca(2+) and Na(+) ions.

The protein localises to the cell surface. It localises to the cell membrane. Functionally, exhibits fusogenic activity. Mediates cell-cell fusion in mammalian cells (bilateral fusion). This chain is Fusexin 1, found in Haloferax sp. (strain Q22).